Reading from the N-terminus, the 623-residue chain is 1-deoxy-D-xylulose-5-phosphate synthase (623 aa).

Thiamine diphosphate-binding positions include H80 and 121 to 123 (GHS). D152 contributes to the Mg(2+) binding site. Thiamine diphosphate contacts are provided by residues 153–154 (GA), N181, Y289, and E372. N181 lines the Mg(2+) pocket.

This sequence belongs to the transketolase family. DXPS subfamily. In terms of assembly, homodimer. It depends on Mg(2+) as a cofactor. The cofactor is thiamine diphosphate.

It carries out the reaction D-glyceraldehyde 3-phosphate + pyruvate + H(+) = 1-deoxy-D-xylulose 5-phosphate + CO2. It functions in the pathway metabolic intermediate biosynthesis; 1-deoxy-D-xylulose 5-phosphate biosynthesis; 1-deoxy-D-xylulose 5-phosphate from D-glyceraldehyde 3-phosphate and pyruvate: step 1/1. Functionally, catalyzes the acyloin condensation reaction between C atoms 2 and 3 of pyruvate and glyceraldehyde 3-phosphate to yield 1-deoxy-D-xylulose-5-phosphate (DXP). This Baumannia cicadellinicola subsp. Homalodisca coagulata protein is 1-deoxy-D-xylulose-5-phosphate synthase.